A 414-amino-acid polypeptide reads, in one-letter code: Putative nickel insertion protein (414 aa).

The interval 70-91 (ATHHDHDHSQDQTHHHHADHAP) is disordered.

It belongs to the LarC family.

The protein is Putative nickel insertion protein of Picosynechococcus sp. (strain ATCC 27264 / PCC 7002 / PR-6) (Agmenellum quadruplicatum).